The primary structure comprises 106 residues: V-type proton ATPase subunit G2 (106 aa).

An N-acetylmethionine modification is found at methionine 1. A disordered region spans residues 31–67 (LKQAKEEAETEVAEHKTSTEQGFQRKLEATSGDSGAN). A compositionally biased stretch (basic and acidic residues) spans 33 to 58 (QAKEEAETEVAEHKTSTEQGFQRKLE).

It belongs to the V-ATPase G subunit family. In terms of assembly, V-ATPase is a heteromultimeric enzyme composed of a peripheral catalytic V1 complex (components A to H) attached to an integral membrane V0 proton pore complex (components: a, c, c'', d and e).

The protein resides in the vacuole membrane. Its function is as follows. Catalytic subunit of the peripheral V1 complex of vacuolar ATPase (V-ATPase). V-ATPase is responsible for acidifying a variety of intracellular compartments in eukaryotic cells. The chain is V-type proton ATPase subunit G2 (VHA-G2) from Arabidopsis thaliana (Mouse-ear cress).